Here is a 119-residue protein sequence, read N- to C-terminus: Large ribosomal subunit protein bL20 (119 aa).

This sequence belongs to the bacterial ribosomal protein bL20 family.

Functionally, binds directly to 23S ribosomal RNA and is necessary for the in vitro assembly process of the 50S ribosomal subunit. It is not involved in the protein synthesizing functions of that subunit. The protein is Large ribosomal subunit protein bL20 of Coxiella burnetii (strain CbuK_Q154) (Coxiella burnetii (strain Q154)).